An 874-amino-acid polypeptide reads, in one-letter code: Envelope glycoprotein B (874 aa).

Positions 1–25 (MGVGGGPRVVLCLWCVAALLCQGVA) are cleaved as a signal peptide. The Virion surface portion of the chain corresponds to 26-727 (QEVVAETTTP…SGVISFFKNP (702 aa)). 5 disulfide bridges follow: cysteine 59–cysteine 523, cysteine 77–cysteine 479, cysteine 149–cysteine 214, cysteine 306–cysteine 353, and cysteine 546–cysteine 583. An involved in fusion and/or binding to host membrane region spans residues 116-122 (IYKGWSE). N-linked (GlcNAc...) asparagine; by host glycosylation is present at asparagine 171. Residues 200-208 (RNLLWSYTT) are involved in fusion and/or binding to host membrane. Residues asparagine 247, asparagine 281, asparagine 302, asparagine 323, asparagine 348, asparagine 356, asparagine 376, asparagine 409, asparagine 412, asparagine 444, asparagine 558, asparagine 610, and asparagine 624 are each glycosylated (N-linked (GlcNAc...) asparagine; by host). A disordered region spans residues 412–450 (NATASPTSTPTTSPRRRRRDTSSVSGGGNNGDNSTKEES). Positions 673–725 (LDDSIDHGRDSFIQTLGDIMQDLGTIGKVVVNVASGVFSLFGSIVSGVISFFK) are hydrophobic membrane proximal region. Residues 728–748 (FGGMLLIVLIIAGVVVVYLFM) form a helical membrane-spanning segment. Residues 749–874 (TRSRSIYSAP…VEAGTADTGV (126 aa)) lie on the Intravirion side of the membrane. The interval 830–874 (RRGGGGYQRLQRDGSDDEGDYEPLRRQDGGYDDVDVEAGTADTGV) is disordered. Residues 836-839 (YQRL) carry the Internalization motif motif.

This sequence belongs to the herpesviridae glycoprotein B family. In terms of assembly, homotrimer; disulfide-linked. Binds to heparan sulfate proteoglycans. Interacts with gH/gL heterodimer. In terms of processing, a proteolytic cleavage by host furin generates two subunits that remain linked by disulfide bonds.

Its subcellular location is the virion membrane. It is found in the host cell membrane. The protein localises to the host endosome membrane. It localises to the host Golgi apparatus membrane. Functionally, envelope glycoprotein that forms spikes at the surface of virion envelope. Essential for the initial attachment to heparan sulfate moieties of the host cell surface proteoglycans. Involved in fusion of viral and cellular membranes leading to virus entry into the host cell. Following initial binding to its host receptors, membrane fusion is mediated by the fusion machinery composed at least of gB and the heterodimer gH/gL. May be involved in the fusion between the virion envelope and the outer nuclear membrane during virion egress. In Equus caballus (Horse), this protein is Envelope glycoprotein B.